We begin with the raw amino-acid sequence, 264 residues long: 3'-5' ssDNA/RNA exonuclease TatD (264 aa).

3 residues coordinate a divalent metal cation: Glu-92, His-128, and His-153.

Belongs to the metallo-dependent hydrolases superfamily. TatD-type hydrolase family. TatD subfamily. Monomer. It depends on Mg(2+) as a cofactor.

The protein resides in the cytoplasm. Functionally, 3'-5' exonuclease that prefers single-stranded DNA and RNA. May play a role in the H(2)O(2)-induced DNA damage repair. The protein is 3'-5' ssDNA/RNA exonuclease TatD of Dickeya dadantii (strain 3937) (Erwinia chrysanthemi (strain 3937)).